A 356-amino-acid polypeptide reads, in one-letter code: Tyrosine recombinase XerS (356 aa).

One can recognise a Core-binding (CB) domain in the interval 16–121; it reads IMPWYVLDYY…ALSSLYKYLT (106 aa). Residues 169 to 354 enclose the Tyr recombinase domain; sequence AFLDYVDKEY…VNDEQKNALD (186 aa). Active-site residues include R210, K234, H306, R309, and H332. Y341 (O-(3'-phospho-DNA)-tyrosine intermediate) is an active-site residue.

The protein belongs to the 'phage' integrase family. XerS subfamily.

It localises to the cytoplasm. With respect to regulation, ftsK is required for recombination. Its function is as follows. Site-specific tyrosine recombinase, which acts by catalyzing the cutting and rejoining of the recombining DNA molecules. Essential to convert dimers of the bacterial chromosome into monomers to permit their segregation at cell division. This chain is Tyrosine recombinase XerS, found in Streptococcus pyogenes serotype M49 (strain NZ131).